The following is a 290-amino-acid chain: ATP synthase gamma chain (290 aa).

It belongs to the ATPase gamma chain family. As to quaternary structure, F-type ATPases have 2 components, CF(1) - the catalytic core - and CF(0) - the membrane proton channel. CF(1) has five subunits: alpha(3), beta(3), gamma(1), delta(1), epsilon(1). CF(0) has three main subunits: a, b and c.

Its subcellular location is the cell membrane. Produces ATP from ADP in the presence of a proton gradient across the membrane. The gamma chain is believed to be important in regulating ATPase activity and the flow of protons through the CF(0) complex. This is ATP synthase gamma chain from Listeria welshimeri serovar 6b (strain ATCC 35897 / DSM 20650 / CCUG 15529 / CIP 8149 / NCTC 11857 / SLCC 5334 / V8).